We begin with the raw amino-acid sequence, 106 residues long: UPF0091 protein RP266 (106 aa).

Belongs to the UPF0091 family.

This is UPF0091 protein RP266 from Rickettsia prowazekii (strain Madrid E).